The sequence spans 397 residues: Mannan endo-1,4-beta-mannosidase 1 (397 aa).

Residues 1-23 (MSYARRSCICGLFLLFLALVCEA) form the signal peptide. Substrate contacts are provided by Trp83 and Asn198. Residue Glu199 is the Proton donor of the active site. Tyr276 contacts substrate. Residue Glu316 is the Nucleophile of the active site. Substrate is bound at residue Trp354.

The protein belongs to the glycosyl hydrolase 5 (cellulase A) family.

It is found in the secreted. It carries out the reaction Random hydrolysis of (1-&gt;4)-beta-D-mannosidic linkages in mannans, galactomannans and glucomannans.. The protein is Mannan endo-1,4-beta-mannosidase 1 (MAN1) of Solanum lycopersicum (Tomato).